Reading from the N-terminus, the 200-residue chain is Potassium-transporting ATPase KdpC subunit (200 aa).

The helical transmembrane segment at Pro-6–Thr-26 threads the bilayer.

This sequence belongs to the KdpC family. In terms of assembly, the system is composed of three essential subunits: KdpA, KdpB and KdpC.

The protein resides in the cell inner membrane. In terms of biological role, part of the high-affinity ATP-driven potassium transport (or Kdp) system, which catalyzes the hydrolysis of ATP coupled with the electrogenic transport of potassium into the cytoplasm. This subunit acts as a catalytic chaperone that increases the ATP-binding affinity of the ATP-hydrolyzing subunit KdpB by the formation of a transient KdpB/KdpC/ATP ternary complex. This chain is Potassium-transporting ATPase KdpC subunit, found in Yersinia enterocolitica serotype O:8 / biotype 1B (strain NCTC 13174 / 8081).